Consider the following 46-residue polypeptide: GGCIKWNHSCQTTTLKCCGKCVVCYCHTPWGTNCRCDRTRLFCTED.

Disulfide bonds link Cys-3-Cys-18, Cys-10-Cys-24, Cys-17-Cys-36, Cys-21-Cys-43, and Cys-26-Cys-34.

It belongs to the neurotoxin 02 (plectoxin) family. 02 (plectoxin) subfamily. Expressed by the venom gland.

It is found in the secreted. Functionally, competes for binding at site 3 of the insect voltage-gated sodium channel (Nav). Insecticidal neurotoxin. Causes temporary paralysis to lepidopteran larvae (10.3 nmol/g) or to crickets (doses from 0.93 to 119 ug/g). Is not toxic to mice when injected intracranially (high doses). The sequence is that of Mu-hexatoxin-Mg2a from Macrothele gigas (Japanese funnel web spider).